Consider the following 496-residue polypeptide: L-arabinose isomerase (496 aa).

Residues glutamate 306, glutamate 331, histidine 348, and histidine 447 each contribute to the Mn(2+) site.

Belongs to the arabinose isomerase family. Mn(2+) is required as a cofactor.

The catalysed reaction is beta-L-arabinopyranose = L-ribulose. Its pathway is carbohydrate degradation; L-arabinose degradation via L-ribulose; D-xylulose 5-phosphate from L-arabinose (bacterial route): step 1/3. Functionally, catalyzes the conversion of L-arabinose to L-ribulose. The protein is L-arabinose isomerase of Geobacillus thermodenitrificans (strain NG80-2).